The primary structure comprises 330 residues: Methionyl-tRNA formyltransferase (330 aa).

Residue 112–115 (SLLP) participates in (6S)-5,6,7,8-tetrahydrofolate binding.

The protein belongs to the Fmt family.

The catalysed reaction is L-methionyl-tRNA(fMet) + (6R)-10-formyltetrahydrofolate = N-formyl-L-methionyl-tRNA(fMet) + (6S)-5,6,7,8-tetrahydrofolate + H(+). Attaches a formyl group to the free amino group of methionyl-tRNA(fMet). The formyl group appears to play a dual role in the initiator identity of N-formylmethionyl-tRNA by promoting its recognition by IF2 and preventing the misappropriation of this tRNA by the elongation apparatus. This chain is Methionyl-tRNA formyltransferase, found in Synechocystis sp. (strain ATCC 27184 / PCC 6803 / Kazusa).